A 214-amino-acid polypeptide reads, in one-letter code: Thiamine-phosphate synthase (214 aa).

4-amino-2-methyl-5-(diphosphooxymethyl)pyrimidine contacts are provided by residues 37 to 41 and N73; that span reads QYREK. The Mg(2+) site is built by D74 and D93. S112 contacts 4-amino-2-methyl-5-(diphosphooxymethyl)pyrimidine. 139–141 provides a ligand contact to 2-[(2R,5Z)-2-carboxy-4-methylthiazol-5(2H)-ylidene]ethyl phosphate; it reads TIS. K142 provides a ligand contact to 4-amino-2-methyl-5-(diphosphooxymethyl)pyrimidine. 2-[(2R,5Z)-2-carboxy-4-methylthiazol-5(2H)-ylidene]ethyl phosphate-binding positions include G171 and 191–192; that span reads IS.

This sequence belongs to the thiamine-phosphate synthase family. Mg(2+) is required as a cofactor.

The catalysed reaction is 2-[(2R,5Z)-2-carboxy-4-methylthiazol-5(2H)-ylidene]ethyl phosphate + 4-amino-2-methyl-5-(diphosphooxymethyl)pyrimidine + 2 H(+) = thiamine phosphate + CO2 + diphosphate. It carries out the reaction 2-(2-carboxy-4-methylthiazol-5-yl)ethyl phosphate + 4-amino-2-methyl-5-(diphosphooxymethyl)pyrimidine + 2 H(+) = thiamine phosphate + CO2 + diphosphate. The enzyme catalyses 4-methyl-5-(2-phosphooxyethyl)-thiazole + 4-amino-2-methyl-5-(diphosphooxymethyl)pyrimidine + H(+) = thiamine phosphate + diphosphate. It participates in cofactor biosynthesis; thiamine diphosphate biosynthesis; thiamine phosphate from 4-amino-2-methyl-5-diphosphomethylpyrimidine and 4-methyl-5-(2-phosphoethyl)-thiazole: step 1/1. Its function is as follows. Condenses 4-methyl-5-(beta-hydroxyethyl)thiazole monophosphate (THZ-P) and 2-methyl-4-amino-5-hydroxymethyl pyrimidine pyrophosphate (HMP-PP) to form thiamine monophosphate (TMP). This is Thiamine-phosphate synthase from Listeria innocua serovar 6a (strain ATCC BAA-680 / CLIP 11262).